The following is a 402-amino-acid chain: Endo-polygalacturonase (402 aa).

Residues 1–23 form the signal peptide; sequence MEYQSGKRVLSLSLGLIGLFSAS. D249 (proton donor) is an active-site residue. The active site involves H277.

Belongs to the glycosyl hydrolase 28 family. In terms of assembly, monomer.

Its subcellular location is the secreted. The catalysed reaction is (1,4-alpha-D-galacturonosyl)n+m + H2O = (1,4-alpha-D-galacturonosyl)n + (1,4-alpha-D-galacturonosyl)m.. Functionally, involved in maceration and soft-rotting of plant tissue. In Pectobacterium carotovorum subsp. carotovorum (Erwinia carotovora subsp. carotovora), this protein is Endo-polygalacturonase (peh).